The chain runs to 130 residues: Small ribosomal subunit protein bS6 (130 aa).

The tract at residues Ser100–Glu130 is disordered. Residues Lys104 to Phe116 are compositionally biased toward basic and acidic residues. Acidic residues predominate over residues Ala117–Glu130.

Belongs to the bacterial ribosomal protein bS6 family.

Binds together with bS18 to 16S ribosomal RNA. The chain is Small ribosomal subunit protein bS6 from Pectobacterium carotovorum subsp. carotovorum (strain PC1).